Here is a 319-residue protein sequence, read N- to C-terminus: DNA-directed RNA polymerases IV and V subunit 3B (319 aa).

At methionine 1 the chain carries N-acetylmethionine.

The protein belongs to the archaeal Rpo3/eukaryotic RPB3 RNA polymerase subunit family. As to quaternary structure, component of the RNA polymerase IV and V complexes. Interacts with NRPB11, SHH1, GRP23 and NRPD1.

It is found in the nucleus. DNA-dependent RNA polymerase catalyzes the transcription of DNA into RNA using the four ribonucleoside triphosphates as substrates. Component of RNA polymerases IV and V which mediate short-interfering RNAs (siRNA) accumulation and subsequent RNA-directed DNA methylation-dependent (RdDM) transcriptional gene silencing (TGS) of endogenous repeated sequences, including transposable elements. The protein is DNA-directed RNA polymerases IV and V subunit 3B (NRPD3B) of Arabidopsis thaliana (Mouse-ear cress).